The chain runs to 342 residues: Isopentenyl-diphosphate delta-isomerase (342 aa).

12–13 contacts substrate; the sequence is RK. Residues 71-73, serine 101, and asparagine 129 contribute to the FMN site; that span reads AMT. 101-103 is a binding site for substrate; the sequence is SQR. A substrate-binding site is contributed by glutamine 163. Mg(2+) is bound at residue glutamate 164. Residues lysine 195, threonine 225, 272–274, and 293–294 contribute to the FMN site; these read GIR and AR.

This sequence belongs to the IPP isomerase type 2 family. In terms of assembly, homooctamer. Dimer of tetramers. Requires FMN as cofactor. The cofactor is NADPH. Mg(2+) serves as cofactor.

The protein resides in the cytoplasm. The catalysed reaction is isopentenyl diphosphate = dimethylallyl diphosphate. Its function is as follows. Involved in the biosynthesis of isoprenoids. Catalyzes the 1,3-allylic rearrangement of the homoallylic substrate isopentenyl (IPP) to its allylic isomer, dimethylallyl diphosphate (DMAPP). The chain is Isopentenyl-diphosphate delta-isomerase from Mycolicibacterium vanbaalenii (strain DSM 7251 / JCM 13017 / BCRC 16820 / KCTC 9966 / NRRL B-24157 / PYR-1) (Mycobacterium vanbaalenii).